A 375-amino-acid chain; its full sequence is uncharacterized protein (375 aa).

Residues 1 to 12 show a composition bias toward basic residues; sequence MAGNKKQVKKNT. Disordered stretches follow at residues 1 to 76 and 119 to 274; these read MAGN…EKKS and KNKN…KEIK. Residues 26–39 are compositionally biased toward polar residues; sequence DTSNLDTAVQTSAS. Over residues 129–141 the composition is skewed to low complexity; the sequence is TATDGTTTTTNIP. Over residues 175-185 the composition is skewed to basic and acidic residues; sequence DETHSHKEEPK. Composition is skewed to low complexity over residues 198-212 and 225-241; these read SKQQ…SSSS and PTPT…KSTP. The segment covering 256-274 has biased composition (basic and acidic residues); that stretch reads EQPKEKSSPAPVKKEKEIK. The next 2 helical transmembrane spans lie at 299-319 and 327-347; these read VVYK…LVPL and IYSY…TLFI. The tract at residues 355-375 is disordered; it reads ASKEQKSKSGNKKSTTRKVKA. Basic residues predominate over residues 363–375; the sequence is SGNKKSTTRKVKA.

It is found in the membrane. This is an uncharacterized protein from Dictyostelium discoideum (Social amoeba).